The chain runs to 331 residues: Ornithine carbamoyltransferase (331 aa).

Residues 55 to 58 (STRT), glutamine 82, arginine 106, and 133 to 136 (HPTQ) contribute to the carbamoyl phosphate site. L-ornithine is bound by residues asparagine 166, aspartate 230, and 234–235 (SM). Residues 272 to 273 (CL) and arginine 317 contribute to the carbamoyl phosphate site.

The protein belongs to the aspartate/ornithine carbamoyltransferase superfamily. OTCase family.

The protein localises to the cytoplasm. It catalyses the reaction carbamoyl phosphate + L-ornithine = L-citrulline + phosphate + H(+). It functions in the pathway amino-acid biosynthesis; L-arginine biosynthesis; L-arginine from L-ornithine and carbamoyl phosphate: step 1/3. Its function is as follows. Reversibly catalyzes the transfer of the carbamoyl group from carbamoyl phosphate (CP) to the N(epsilon) atom of ornithine (ORN) to produce L-citrulline. This Neisseria meningitidis serogroup C / serotype 2a (strain ATCC 700532 / DSM 15464 / FAM18) protein is Ornithine carbamoyltransferase.